Reading from the N-terminus, the 270-residue chain is Orotidine 5'-phosphate decarboxylase (270 aa).

Substrate is bound by residues aspartate 39, 61–63, 93–102, tyrosine 221, and arginine 239; these read KTH and DRKFADIGNT. The Proton donor role is filled by lysine 95.

Belongs to the OMP decarboxylase family.

The catalysed reaction is orotidine 5'-phosphate + H(+) = UMP + CO2. The protein operates within pyrimidine metabolism; UMP biosynthesis via de novo pathway; UMP from orotate: step 2/2. The protein is Orotidine 5'-phosphate decarboxylase (URA3) of Candida albicans (strain SC5314 / ATCC MYA-2876) (Yeast).